The chain runs to 379 residues: Protein hairy (379 aa).

The interval 20-50 is disordered; that stretch reads STQQQQQQQQHKEAPIKSDRRSNKPIMEKRR. Over residues 29-47 the composition is skewed to basic and acidic residues; it reads QHKEAPIKSDRRSNKPIME. Positions 36–55 are interaction with Topors; sequence KSDRRSNKPIMEKRRRARIN. One can recognise a bHLH domain in the interval 38–95; the sequence is DRRSNKPIMEKRRRARINNCLNELKTLILDATKKDPARHSKLEKADILEKTVKHLQEL. Positions 114 to 143 constitute an Orange domain; the sequence is FKAGFADCANEVSRFPGLDSTQRRRLLQHL. 2 disordered regions span residues 167 to 208 and 298 to 345; these read QSLH…NTTA and QRTA…VKPS. Composition is skewed to low complexity over residues 182 to 207 and 301 to 328; these read PEQE…TNTT and ASTG…GSYA. The WRPW motif motif lies at 376 to 379; the sequence is WRPW.

Transcription repression requires formation of a complex with a corepressor protein (Groucho).

It localises to the nucleus. In terms of biological role, pair-rule protein that regulates embryonic segmentation and adult bristle patterning. Transcriptional repressor of genes that require a bHLH protein for their transcription (e.g. ftz). The sequence is that of Protein hairy from Drosophila virilis (Fruit fly).